The sequence spans 255 residues: 5'-nucleotidase SurE (255 aa).

Positions 8, 9, 40, and 93 each coordinate a divalent metal cation.

Belongs to the SurE nucleotidase family. The cofactor is a divalent metal cation.

The protein resides in the cytoplasm. It carries out the reaction a ribonucleoside 5'-phosphate + H2O = a ribonucleoside + phosphate. Nucleotidase that shows phosphatase activity on nucleoside 5'-monophosphates. The sequence is that of 5'-nucleotidase SurE from Rhodopseudomonas palustris (strain ATCC BAA-98 / CGA009).